Consider the following 121-residue polypeptide: Large ribosomal subunit protein eL18 (121 aa).

The protein belongs to the eukaryotic ribosomal protein eL18 family.

This Methanosphaerula palustris (strain ATCC BAA-1556 / DSM 19958 / E1-9c) protein is Large ribosomal subunit protein eL18.